Consider the following 431-residue polypeptide: Serine--tRNA ligase (431 aa).

Thr235–Glu237 serves as a coordination point for L-serine. ATP is bound by residues Arg266–Glu268 and Val282. Residue Glu289 coordinates L-serine. Residue Glu353 to Ser356 coordinates ATP. Ser389 is a binding site for L-serine.

The protein belongs to the class-II aminoacyl-tRNA synthetase family. Type-1 seryl-tRNA synthetase subfamily. As to quaternary structure, homodimer. The tRNA molecule binds across the dimer.

Its subcellular location is the cytoplasm. It carries out the reaction tRNA(Ser) + L-serine + ATP = L-seryl-tRNA(Ser) + AMP + diphosphate + H(+). The enzyme catalyses tRNA(Sec) + L-serine + ATP = L-seryl-tRNA(Sec) + AMP + diphosphate + H(+). Its pathway is aminoacyl-tRNA biosynthesis; selenocysteinyl-tRNA(Sec) biosynthesis; L-seryl-tRNA(Sec) from L-serine and tRNA(Sec): step 1/1. In terms of biological role, catalyzes the attachment of serine to tRNA(Ser). Is also able to aminoacylate tRNA(Sec) with serine, to form the misacylated tRNA L-seryl-tRNA(Sec), which will be further converted into selenocysteinyl-tRNA(Sec). This Pelodictyon phaeoclathratiforme (strain DSM 5477 / BU-1) protein is Serine--tRNA ligase.